We begin with the raw amino-acid sequence, 95 residues long: Protein Vpr (95 aa).

Residues 1–42 (MEQAPEDQGPQREPYNEWALELLEDLKNEALRHFPRPWLHGL) form a homooligomerization region. Residues Ser79, Ser93, and Ser95 each carry the phosphoserine; by host modification.

This sequence belongs to the HIV-1 VPR protein family. In terms of assembly, homooligomer, may form homodimer. Interacts with p6-gag region of the Pr55 Gag precursor protein through a (Leu-X-X)4 motif near the C-terminus of the P6gag protein. Interacts with host UNG. May interact with host RAD23A/HHR23A. Interacts with host VPRBP/DCAF1, leading to hijack the CUL4A-RBX1-DDB1-DCAF1/VPRBP complex, mediating ubiquitination of host proteins such as TERT and ZGPAT and arrest of the cell cycle in G2 phase. Post-translationally, phosphorylated on several residues by host. These phosphorylations regulate VPR activity for the nuclear import of the HIV-1 pre-integration complex.

The protein resides in the virion. It localises to the host nucleus. It is found in the host extracellular space. Functionally, during virus replication, may deplete host UNG protein, and incude G2-M cell cycle arrest. Acts by targeting specific host proteins for degradation by the 26S proteasome, through association with the cellular CUL4A-DDB1 E3 ligase complex by direct interaction with host VPRPB/DCAF-1. Cell cycle arrest reportedly occurs within hours of infection and is not blocked by antiviral agents, suggesting that it is initiated by the VPR carried into the virion. Additionally, VPR induces apoptosis in a cell cycle dependent manner suggesting that these two effects are mechanistically linked. Detected in the serum and cerebrospinal fluid of AIDS patient, VPR may also induce cell death to bystander cells. In terms of biological role, during virus entry, plays a role in the transport of the viral pre-integration (PIC) complex to the host nucleus. This function is crucial for viral infection of non-dividing macrophages. May act directly at the nuclear pore complex, by binding nucleoporins phenylalanine-glycine (FG)-repeat regions. The chain is Protein Vpr from Pan troglodytes (Chimpanzee).